A 1004-amino-acid chain; its full sequence is DNA-directed RNA polymerase subunit beta' (1004 aa).

Aspartate 388, aspartate 390, and aspartate 392 together coordinate Mg(2+). Cysteine 757, cysteine 831, cysteine 838, and cysteine 841 together coordinate Zn(2+).

The protein belongs to the RNA polymerase beta' chain family. In terms of assembly, the RNAP catalytic core consists of 2 alpha, 1 beta, 1 beta' and 1 omega subunit. When a sigma factor is associated with the core the holoenzyme is formed, which can initiate transcription. Requires Mg(2+) as cofactor. Zn(2+) is required as a cofactor.

It catalyses the reaction RNA(n) + a ribonucleoside 5'-triphosphate = RNA(n+1) + diphosphate. In terms of biological role, DNA-dependent RNA polymerase catalyzes the transcription of DNA into RNA using the four ribonucleoside triphosphates as substrates. This is DNA-directed RNA polymerase subunit beta' from Oenococcus oeni (Leuconostoc oenos).